The sequence spans 273 residues: Undecaprenyl-diphosphatase (273 aa).

7 helical membrane passes run 6 to 26 (SLLI…LPVS), 45 to 65 (AKTF…VMFW), 90 to 110 (LTLI…LLFH), 116 to 136 (LFNP…LIAA), 190 to 210 (YAAS…ATAL), 222 to 242 (GDIP…LIAI), and 252 to 272 (ISFI…YVVF).

Belongs to the UppP family.

The protein resides in the cell inner membrane. The enzyme catalyses di-trans,octa-cis-undecaprenyl diphosphate + H2O = di-trans,octa-cis-undecaprenyl phosphate + phosphate + H(+). In terms of biological role, catalyzes the dephosphorylation of undecaprenyl diphosphate (UPP). Confers resistance to bacitracin. The chain is Undecaprenyl-diphosphatase from Escherichia coli O139:H28 (strain E24377A / ETEC).